The sequence spans 63 residues: Large ribosomal subunit protein bL28 (63 aa).

The protein belongs to the bacterial ribosomal protein bL28 family.

This Geobacter sulfurreducens (strain ATCC 51573 / DSM 12127 / PCA) protein is Large ribosomal subunit protein bL28.